The sequence spans 89 residues: Small ribosomal subunit protein bS18 (89 aa).

Positions methionine 1–alanine 15 are enriched in low complexity. The segment at methionine 1–lysine 22 is disordered.

Belongs to the bacterial ribosomal protein bS18 family. As to quaternary structure, part of the 30S ribosomal subunit. Forms a tight heterodimer with protein bS6.

Its function is as follows. Binds as a heterodimer with protein bS6 to the central domain of the 16S rRNA, where it helps stabilize the platform of the 30S subunit. This is Small ribosomal subunit protein bS18 from Caldanaerobacter subterraneus subsp. tengcongensis (strain DSM 15242 / JCM 11007 / NBRC 100824 / MB4) (Thermoanaerobacter tengcongensis).